The sequence spans 325 residues: Hexaprenyl-diphosphate synthase large subunit ((2E,6E)-farnesyl-diphosphate specific) (325 aa).

3 residues coordinate isopentenyl diphosphate: Lys45, Arg48, and His77. All-trans-hexaprenyl diphosphate contacts are provided by Asp84, Asp88, and Arg93. Positions 84 and 88 each coordinate Mg(2+). Isopentenyl diphosphate is bound at residue Arg94. 3 residues coordinate all-trans-hexaprenyl diphosphate: Lys170, Thr171, and Gln208.

Belongs to the FPP/GGPP synthase family. In terms of assembly, dimer of heterodimer or heterotetramer composed of a small (Hexs-a) and large (Hexs-B) subunit. Requires Mg(2+) as cofactor.

It carries out the reaction 3 isopentenyl diphosphate + (2E,6E)-farnesyl diphosphate = all-trans-hexaprenyl diphosphate + 3 diphosphate. Catalyzes the condensation of three molecules of isopentenyl diphosphate with farnesyl diphosphate (FPP) to yield (all-E)-hexaprenyl diphosphate (HexPP; C30), the precursor of the prenyl side chain of menaquinone-6. Large subunit Hexs-B catalyzes the condensation reaction and the final product chain length is cooperatively regulated by both the Hexs-A and Hexs-B subunits using the whole size of the hydrophobic cleft as a ruler. In Micrococcus luteus (Micrococcus lysodeikticus), this protein is Hexaprenyl-diphosphate synthase large subunit ((2E,6E)-farnesyl-diphosphate specific) (hexs-b).